The chain runs to 788 residues: Protein FAR1-RELATED SEQUENCE 12 (788 aa).

In terms of domain architecture, FAR1 1 spans 57-133 (EFYNAYAART…QKEHNHELGG (77 aa)). The segment at 127 to 200 (HNHELGGEGS…GEVSDDHHQT (74 aa)) is disordered. The span at 142-151 (PRPSRAPAPT) shows a compositional bias: low complexity. The segment covering 165 to 175 (KVVDESDRETR) has biased composition (basic and acidic residues). In terms of domain architecture, FAR1 2 spans 225 to 301 (QFYQAYAEVV…NKDHNHDLEP (77 aa)). Residues 399 to 495 (SVVFDTSYRK…SAWQIREKER (97 aa)) enclose the MULE domain. The SWIM-type zinc-finger motif lies at 674–710 (HAVTFSASNLNSSCSCQMFEHEGLLCRHILKVFNLLD).

It belongs to the FHY3/FAR1 family. In terms of tissue distribution, expressed in hypocotyls, rosette and cauline leaves, inflorescences stems, flowers and siliques.

The protein localises to the nucleus. Its function is as follows. Putative transcription activator involved in regulating light control of development. In Arabidopsis thaliana (Mouse-ear cress), this protein is Protein FAR1-RELATED SEQUENCE 12 (FRS12).